Here is a 196-residue protein sequence, read N- to C-terminus: Calcineurin B homologous protein 2 (196 aa).

The N-myristoyl glycine moiety is linked to residue G2. 4 EF-hand domains span residues 26–61 (ASLL…AVNP), 71–106 (FPNG…PKQP), 111–146 (SRMN…MVGV), and 152–187 (QLES…MNIE). At S27 the chain carries Phosphoserine. D124, D126, D128, K130, and E135 together coordinate Ca(2+). A Nuclear export signal motif is present at residues 137-148 (LQVLRLMVGVQV). Residues D165, D167, D169, and E176 each coordinate Ca(2+).

It belongs to the calcineurin regulatory subunit family. CHP subfamily. As to quaternary structure, interacts with PPP3CA. Interacts with SLC9A1/NHE1; the interaction occurs in a calcium-dependent manner. Interacts with SLC9A1/NHE1.

The protein localises to the cytoplasm. Its subcellular location is the nucleus. The protein resides in the cell membrane. Functionally, functions as an integral cofactor in cell pH regulation by controlling plasma membrane-type Na(+)/H(+) exchange activity. Binds to and activates SLC9A1/NHE1 in a serum-independent manner, thus increasing pH and protecting cells from serum deprivation-induced death. Also plays a role in the regulation of cell proliferation and tumor growth by increasing the phosphatase activity of PPP3CA in a calcium-dependent manner. Activator of the calcineurin/NFAT signaling pathway. Involved in the cytoplasmic translocation of the transcription factor NFATC3 to the nucleus. The chain is Calcineurin B homologous protein 2 (Chp2) from Mus musculus (Mouse).